We begin with the raw amino-acid sequence, 471 residues long: Intraflagellar transport protein 46 homolog (471 aa).

Disordered regions lie at residues 1–202 and 226–246; these read MSSE…SNMR and SRLEDDSSNDDDDDDDDEDDD. 2 stretches are compositionally biased toward acidic residues: residues 89–99 and 231–246; these read SEPQEVIDVND and DSSNDDDDDDDDEDDD.

This sequence belongs to the IFT46 family. As to quaternary structure, component of the IFT complex B composed of at least che-2, che-13, dyf-1, dyf-3, dyf-6, dyf-11, dyf-13, ift-20, ift-74, ift-81, ifta-2, osm-1, osm-5 and osm-6. Expressed in the hypodermis and sensory neurons including inner labial, PDE, amphid and phasmid neurons.

Its subcellular location is the cell projection. It localises to the cilium. The protein resides in the cytoplasm. It is found in the cytoskeleton. The protein localises to the cilium basal body. Its subcellular location is the dendrite. It localises to the perikaryon. Functionally, component of the intraflagellar transport (IFT) complex B required for transport of proteins in the motile cilium. May be required for ciliary entrance and transport of specific ciliary cargo proteins such as che-3 which are related to motility. Required for normal morphology and function of ciliated amphid sensory neurons. In Caenorhabditis elegans, this protein is Intraflagellar transport protein 46 homolog.